The sequence spans 266 residues: Undecaprenyl-diphosphatase 1 (266 aa).

Transmembrane regions (helical) follow at residues M1–I21, Q39–F59, W87–I107, T114–M134, A149–A169, A183–V203, A218–L238, and M246–L266.

It belongs to the UppP family.

It is found in the cell inner membrane. It catalyses the reaction di-trans,octa-cis-undecaprenyl diphosphate + H2O = di-trans,octa-cis-undecaprenyl phosphate + phosphate + H(+). Catalyzes the dephosphorylation of undecaprenyl diphosphate (UPP). Confers resistance to bacitracin. The chain is Undecaprenyl-diphosphatase 1 from Shewanella oneidensis (strain ATCC 700550 / JCM 31522 / CIP 106686 / LMG 19005 / NCIMB 14063 / MR-1).